Consider the following 56-residue polypeptide: Large ribosomal subunit protein bL32 (56 aa).

Residues 1 to 37 are disordered; it reads MAVQQNKKSRSRRDMRRSHDALTTAAVSVDKASGETH. Basic residues predominate over residues 7-16; it reads KKSRSRRDMR.

It belongs to the bacterial ribosomal protein bL32 family.

In Haemophilus influenzae (strain PittEE), this protein is Large ribosomal subunit protein bL32.